Here is a 271-residue protein sequence, read N- to C-terminus: Phosphate import ATP-binding protein PstB (271 aa).

The ABC transporter domain occupies 13-266; sequence VRTAPVSEAE…PKHPYTEAYI (254 aa). Residue 57-64 participates in ATP binding; it reads GPSGCGKS.

Belongs to the ABC transporter superfamily. Phosphate importer (TC 3.A.1.7) family. As to quaternary structure, the complex is composed of two ATP-binding proteins (PstB), two transmembrane proteins (PstC and PstA) and a solute-binding protein (PstS).

The protein resides in the cell inner membrane. The enzyme catalyses phosphate(out) + ATP + H2O = ADP + 2 phosphate(in) + H(+). In terms of biological role, part of the ABC transporter complex PstSACB involved in phosphate import. Responsible for energy coupling to the transport system. This Thermus thermophilus (strain ATCC 27634 / DSM 579 / HB8) protein is Phosphate import ATP-binding protein PstB.